A 397-amino-acid polypeptide reads, in one-letter code: Dual-specificity RNA methyltransferase RlmN (397 aa).

Glu-120 (proton acceptor) is an active-site residue. A Radical SAM core domain is found at 126–369 (ETDRGTLCVS…VRTPRGRDIL (244 aa)). A disulfide bridge connects residues Cys-133 and Cys-372. [4Fe-4S] cluster-binding residues include Cys-140, Cys-144, and Cys-147. S-adenosyl-L-methionine-binding positions include 198-199 (GE), Ser-230, 252-254 (SLH), and Asn-329. Cys-372 functions as the S-methylcysteine intermediate in the catalytic mechanism.

It belongs to the radical SAM superfamily. RlmN family. Requires [4Fe-4S] cluster as cofactor.

It localises to the cytoplasm. The catalysed reaction is adenosine(2503) in 23S rRNA + 2 reduced [2Fe-2S]-[ferredoxin] + 2 S-adenosyl-L-methionine = 2-methyladenosine(2503) in 23S rRNA + 5'-deoxyadenosine + L-methionine + 2 oxidized [2Fe-2S]-[ferredoxin] + S-adenosyl-L-homocysteine. The enzyme catalyses adenosine(37) in tRNA + 2 reduced [2Fe-2S]-[ferredoxin] + 2 S-adenosyl-L-methionine = 2-methyladenosine(37) in tRNA + 5'-deoxyadenosine + L-methionine + 2 oxidized [2Fe-2S]-[ferredoxin] + S-adenosyl-L-homocysteine. Specifically methylates position 2 of adenine 2503 in 23S rRNA and position 2 of adenine 37 in tRNAs. m2A2503 modification seems to play a crucial role in the proofreading step occurring at the peptidyl transferase center and thus would serve to optimize ribosomal fidelity. The chain is Dual-specificity RNA methyltransferase RlmN from Nitrobacter winogradskyi (strain ATCC 25391 / DSM 10237 / CIP 104748 / NCIMB 11846 / Nb-255).